The sequence spans 341 residues: Zinc transporter 6, chloroplastic (341 aa).

A helical membrane pass occupies residues 28-48 (IVAVFAIFLTSVFGVWGPVLL). Residues 49 to 61 (AKYFHGKPLYDKA) are Cytoplasmic-facing. A helical membrane pass occupies residues 62–82 (ILVIKCFAAGVILSTSLVHVL). The Lumenal segment spans residues 83 to 102 (PEAFESLADCQVSSRHPWKD). Residues 103-123 (FPFAGLVTMIGAITALLVDLT) form a helical membrane-spanning segment. At 124–179 (ASEHMGHGGGGGGDGGMEYMPVGKAVGGLEMKEGKCGADLEIQENSEEEIVKMKQR) the chain is on the cytoplasmic side. The chain crosses the membrane as a helical span at residues 180–200 (LVSQVLEIGIIFHSVIIGVTM). Over 201–211 (GMSQNKCTIRP) the chain is Lumenal. A helical membrane pass occupies residues 212-232 (LIAALSFHQIFEGLGLGGCIA). Topologically, residues 233–243 (QAGFKAGTVVY) are cytoplasmic. The chain crosses the membrane as a helical span at residues 244-264 (MCLMFAVTTPLGIVLGMVIFA). The Lumenal segment spans residues 265-280 (ATGYDDQNPNALIMEG). The chain crosses the membrane as a helical span at residues 281–301 (LLGSFSSGILIYMALVDLIAL). Residues 302–320 (DFFHNKMLTTCGESGSRLK) lie on the Cytoplasmic side of the membrane. Residues 321-341 (KLCFVALVLGSASMSLLALWA) traverse the membrane as a helical segment.

It belongs to the ZIP transporter (TC 2.A.5) family.

It localises to the plastid. It is found in the chloroplast thylakoid membrane. In terms of biological role, may play a role in the transport of zinc in the plastids. This Arabidopsis thaliana (Mouse-ear cress) protein is Zinc transporter 6, chloroplastic (ZIP6).